The sequence spans 364 residues: Histidinol-phosphate aminotransferase (364 aa).

Lysine 226 carries the N6-(pyridoxal phosphate)lysine modification.

This sequence belongs to the class-II pyridoxal-phosphate-dependent aminotransferase family. Histidinol-phosphate aminotransferase subfamily. In terms of assembly, homodimer. The cofactor is pyridoxal 5'-phosphate.

It carries out the reaction L-histidinol phosphate + 2-oxoglutarate = 3-(imidazol-4-yl)-2-oxopropyl phosphate + L-glutamate. Its pathway is amino-acid biosynthesis; L-histidine biosynthesis; L-histidine from 5-phospho-alpha-D-ribose 1-diphosphate: step 7/9. In Campylobacter jejuni subsp. jejuni serotype O:6 (strain 81116 / NCTC 11828), this protein is Histidinol-phosphate aminotransferase.